The following is a 360-amino-acid chain: MKPSFIKKLEALQERHEELQAHLADPLTIQDQERFRMMSREYAQLSNIAELFTEWLKLQNDMIAAKSLLQDPEMHEMATEELEKAKIQSEQLTQQLQILLLPKDIDDSRSCFLEIRAGTGGDEAAIFAGDLFRMYARYAESRSWKMEIISAHEGEHGGYKEMITKISGEGVYGQLKFESGGHRVQRVPTTESQGRIHTSACTVAVMPEIPEEELPKITLSDLRIDTFRSSGAGGQHVNTTDSAIRITHLPTGIVVECQDERSQHKNKAKAMSVLGARMHAAQVQKRQQAQASERRNLLGSGDRSDRHRTYNFPQGRVTDHRINLTLYRLDEVMSGKLDILIHPLLREHQADLLSALSEQE.

Residue glutamine 235 is modified to N5-methylglutamine. Positions 285 to 311 (KRQQAQASERRNLLGSGDRSDRHRTYN) are disordered. Residues 292–308 (SERRNLLGSGDRSDRHR) are compositionally biased toward basic and acidic residues.

This sequence belongs to the prokaryotic/mitochondrial release factor family. Methylated by PrmC. Methylation increases the termination efficiency of RF1.

Its subcellular location is the cytoplasm. Peptide chain release factor 1 directs the termination of translation in response to the peptide chain termination codons UAG and UAA. The polypeptide is Peptide chain release factor 1 (Hamiltonella defensa subsp. Acyrthosiphon pisum (strain 5AT)).